A 251-amino-acid polypeptide reads, in one-letter code: UPF0246 protein DSY0297 (251 aa).

The protein belongs to the UPF0246 family.

This chain is UPF0246 protein DSY0297, found in Desulfitobacterium hafniense (strain Y51).